Reading from the N-terminus, the 497-residue chain is Probable sensor kinase SilS (497 aa).

The Cytoplasmic portion of the chain corresponds to 1 to 15 (MHSKPSRLPFSLALR). The helical transmembrane segment at 16–36 (LTFFISLSTILAFIAFTWFML) threads the bilayer. Topologically, residues 37–186 (HSVEKHFAEQ…HLHYLDALKK (150 aa)) are periplasmic. The chain crosses the membrane as a helical span at residues 187 to 207 (NLIAIAVVISLLIVLIIRIAV). In terms of domain architecture, HAMP spans 208-261 (RQGHLPLRNVSNAIKNITSENLDARLEPTRVPIELEQLVISFNHMIGKIEDVFT). Topologically, residues 208-497 (RQGHLPLRNV…KMIPDTQCWE (290 aa)) are cytoplasmic. In terms of domain architecture, Histidine kinase spans 269 to 487 (DIAHEIRTPI…RFILSVPRLE (219 aa)). Histidine 272 carries the post-translational modification Phosphohistidine; by autocatalysis.

It is found in the cell inner membrane. The enzyme catalyses ATP + protein L-histidine = ADP + protein N-phospho-L-histidine.. In terms of biological role, component of the sil cation-efflux system that confers resistance to silver. Probable member of a two-component regulatory system SilS/SilR. May activate SilR by phosphorylation. This chain is Probable sensor kinase SilS (silS), found in Salmonella typhimurium.